The following is a 565-amino-acid chain: Bifunctional dihydrofolate reductase-thymidylate synthase 2 (565 aa).

The DHFR domain occupies threonine 65 to arginine 242. Valine 69 contributes to the substrate binding site. Residues alanine 71 and glycine 77–lysine 83 each bind NADP(+). Aspartate 91 contacts substrate. Residues arginine 115–threonine 117 and leucine 136–serine 139 each bind NADP(+). A substrate-binding site is contributed by isoleucine 178. Glycine 179–glutamate 186 is an NADP(+) binding site. Threonine 199 lines the substrate pocket. The segment at serine 245 to histidine 280 is hinge. The thymidylate synthase stretch occupies residues glutamate 281–valine 565. Arginine 302 provides a ligand contact to dUMP. The active site involves cysteine 447. Residues histidine 448, glutamine 466 to aspartate 470, asparagine 478, and histidine 508 to tyrosine 510 contribute to the dUMP site.

This sequence in the N-terminal section; belongs to the dihydrofolate reductase family. The protein in the C-terminal section; belongs to the thymidylate synthase family. As to quaternary structure, heterodimer or homodimer.

It catalyses the reaction (6S)-5,6,7,8-tetrahydrofolate + NADP(+) = 7,8-dihydrofolate + NADPH + H(+). The enzyme catalyses dUMP + (6R)-5,10-methylene-5,6,7,8-tetrahydrofolate = 7,8-dihydrofolate + dTMP. The protein operates within cofactor biosynthesis; tetrahydrofolate biosynthesis; 5,6,7,8-tetrahydrofolate from 7,8-dihydrofolate: step 1/1. In terms of biological role, bifunctional enzyme. Involved in de novo dTMP biosynthesis. Key enzyme in folate metabolism. Can play two different roles depending on the source of dihydrofolate: de novo synthesis of tetrahydrofolate or recycling of the dihydrofolate released as one of the end products of the TS catalyzed reaction. Catalyzes an essential reaction for de novo glycine and purine synthesis, DNA precursor synthesis, and for the conversion of dUMP to dTMP. In Arabidopsis thaliana (Mouse-ear cress), this protein is Bifunctional dihydrofolate reductase-thymidylate synthase 2 (THY-2).